The primary structure comprises 1724 residues: Protein mono-ADP-ribosyltransferase PARP4 (1724 aa).

A BRCT domain is found at 1–94; the sequence is MVMGIFANCI…RLLDVKNYDP (94 aa). Residues 19 to 25 carry the Nuclear localization signal motif; the sequence is PQQQKKK. Residues 97-123 are disordered; it reads PLDITPPPDQKASSSEVKTEGLCPDSA. Phosphothreonine occurs at positions 101 and 333. The PARP alpha-helical domain maps to 242-370; that stretch reads SEQLQALLLE…ETNLSKPNPP (129 aa). The PARP catalytic domain maps to 369–573; the sequence is PPSLAKYRAL…FSMPGDQIKD (205 aa). A VIT domain is found at 607 to 735; that stretch reads SSTKAGLQDA…KVLIKITYIT (129 aa). The 171-residue stretch at 876-1046 folds into the VWFA domain; it reads EVIICLDCSS…KQIEDQMTRL (171 aa). Residue serine 1236 is modified to Phosphoserine. A Nuclear localization signal motif is present at residues 1237–1249; that stretch reads KRKHRKIPFSKRK. Serine 1335 bears the Phosphoserine mark. The interval 1408–1452 is disordered; sequence SAQSAPLQHPGGFTTRPSAGTFPELDSPQLHFSLPTDPDPIRGFG. Arginine 1476 carries the asymmetric dimethylarginine modification. Residue serine 1504 is modified to Phosphoserine. The interval 1562 to 1724 is interaction with the major vault protein; that stretch reads VCIQHWQDAV…LHRVLHYSQG (163 aa).

Belongs to the ARTD/PARP family. Component of the vault ribonucleoprotein particle, at least composed of MVP, PARP4 and one or more vault RNAs (vRNAs). Interacts with TEP1. Widely expressed; the highest levels are in the kidney; also detected in heart, placenta, lung, liver, skeletal muscle, spleen, leukocytes and pancreas.

Its subcellular location is the cytoplasm. The protein resides in the nucleus. The protein localises to the cytoskeleton. It localises to the spindle. It carries out the reaction L-aspartyl-[protein] + NAD(+) = 4-O-(ADP-D-ribosyl)-L-aspartyl-[protein] + nicotinamide. The catalysed reaction is L-glutamyl-[protein] + NAD(+) = 5-O-(ADP-D-ribosyl)-L-glutamyl-[protein] + nicotinamide. In terms of biological role, mono-ADP-ribosyltransferase that mediates mono-ADP-ribosylation of target proteins. The polypeptide is Protein mono-ADP-ribosyltransferase PARP4 (Homo sapiens (Human)).